The sequence spans 320 residues: Methionyl-tRNA formyltransferase (320 aa).

114–117 contacts (6S)-5,6,7,8-tetrahydrofolate; sequence SLLP.

Belongs to the Fmt family.

The catalysed reaction is L-methionyl-tRNA(fMet) + (6R)-10-formyltetrahydrofolate = N-formyl-L-methionyl-tRNA(fMet) + (6S)-5,6,7,8-tetrahydrofolate + H(+). Its function is as follows. Attaches a formyl group to the free amino group of methionyl-tRNA(fMet). The formyl group appears to play a dual role in the initiator identity of N-formylmethionyl-tRNA by promoting its recognition by IF2 and preventing the misappropriation of this tRNA by the elongation apparatus. The polypeptide is Methionyl-tRNA formyltransferase (Acinetobacter baumannii (strain SDF)).